Consider the following 830-residue polypeptide: MNFGNIVCFNRVFDKNEIRNLISWFLSNYGSIRTKELLDKMKNFGFTYATTTGLSLGLGDLKIPSSKANLVKSSEKILFKTRNRYKNGMINFINVLDEERDIWNVVNENLKKESINNLRQSDFLNPLYSMTLSGARGSITQVKQLIGMRGLMSDSQGNVIPFPIKTNFKEGLNITEYFVSCYGARKGLIDTALKTANAGYLTRRMIYTAQNLIVKRSDCFTKYNTCVLLQNQDKEELKFLKEKLIGRVLAKTIVNAKTGDILVSAGQDICNYTFKKIINFPEVYIRTPFNCVLMEGICQICYGWNLACGKMVELGECVGILAAQSIGEPGTQLTMRTFHTGGVFSAKAKEVITSPLNGKIWYDLNTGLRRVYNKFKEKAFLTLQEKKIVIYENDVSKSIMFLPSSTLLYVKPGRKIFDKQIIGESVNSNLKNDVFGIEEIRDVKAKISGQIFFPQINSKQFGKIFWIISSIIMSFTSLFFHLTKKFSFKNKLICPTTNVHKKELFVNRKKELFPRKFGKLFINIRNVNSLVDKSKVLKKRSSHIITCILDQDKVIMLRNLKKQKRIFGNFKIGCFLKTGQIISNFKLLHSSQIIQERKEFSIFRKVMPFSTNDDTLMRIEDKPFIRKNQLLYRVNFVREKTYDIVQGLPKVEKLLEARMTSSLKEIINNPHDILTESFFTFLDDYENLVAARKSFEVIQKYLIDGVQTVYKSQGVKIADKHIELIVKQITSKVIVTNPGDSSFMVGDFLDLNLVEVLNKRLVNSIVYEPIIMGLTRFSLSSQSFIAQASFQETTRVLTKAALQGRADWLSGLKENLVLGNIIPAGTGFKN.

Residues cysteine 219, cysteine 291, cysteine 298, and cysteine 301 each coordinate Zn(2+).

Belongs to the RNA polymerase beta' chain family. RpoC2 subfamily. In terms of assembly, in plastids the minimal PEP RNA polymerase catalytic core is composed of four subunits: alpha, beta, beta', and beta''. When a (nuclear-encoded) sigma factor is associated with the core the holoenzyme is formed, which can initiate transcription. It depends on Zn(2+) as a cofactor.

It is found in the plastid. The protein localises to the chloroplast. The catalysed reaction is RNA(n) + a ribonucleoside 5'-triphosphate = RNA(n+1) + diphosphate. DNA-dependent RNA polymerase catalyzes the transcription of DNA into RNA using the four ribonucleoside triphosphates as substrates. The protein is DNA-directed RNA polymerase subunit beta'' (rpoC2) of Euglena gracilis.